The sequence spans 360 residues: Peptide chain release factor 1 (360 aa).

The residue at position 236 (glutamine 236) is an N5-methylglutamine.

The protein belongs to the prokaryotic/mitochondrial release factor family. In terms of processing, methylated by PrmC. Methylation increases the termination efficiency of RF1.

The protein resides in the cytoplasm. Functionally, peptide chain release factor 1 directs the termination of translation in response to the peptide chain termination codons UAG and UAA. The sequence is that of Peptide chain release factor 1 from Ligilactobacillus salivarius (strain UCC118) (Lactobacillus salivarius).